Here is a 518-residue protein sequence, read N- to C-terminus: Glutamate--cysteine ligase (518 aa).

This sequence belongs to the glutamate--cysteine ligase type 1 family. Type 1 subfamily.

It carries out the reaction L-cysteine + L-glutamate + ATP = gamma-L-glutamyl-L-cysteine + ADP + phosphate + H(+). It participates in sulfur metabolism; glutathione biosynthesis; glutathione from L-cysteine and L-glutamate: step 1/2. This chain is Glutamate--cysteine ligase, found in Shigella boydii serotype 18 (strain CDC 3083-94 / BS512).